Reading from the N-terminus, the 692-residue chain is Catalase-B (692 aa).

Residues histidine 69 and asparagine 142 contribute to the active site. Tyrosine 356 contributes to the heme binding site.

This sequence belongs to the catalase family. Heme serves as cofactor.

The protein localises to the cytoplasm. The enzyme catalyses 2 H2O2 = O2 + 2 H2O. Its function is as follows. Occurs in almost all aerobically respiring organisms and serves to protect cells from the toxic effects of hydrogen peroxide. Its accumulation in prespore cells affords the spores protection from oxidation during prolonged dormancy. Required for normal developmental timing, possibly through a regulatory role in differentiation and morphogenesis. The polypeptide is Catalase-B (catB) (Dictyostelium discoideum (Social amoeba)).